The chain runs to 311 residues: Probable inactive peptidyl-prolyl cis-trans isomerase-like 6 (311 aa).

The PPIase cyclophilin-type domain occupies Phe145–Asp308.

The protein belongs to the cyclophilin-type PPIase family.

Probable inactive PPIase with no peptidyl-prolyl cis-trans isomerase activity. The protein is Probable inactive peptidyl-prolyl cis-trans isomerase-like 6 of Homo sapiens (Human).